The following is a 386-amino-acid chain: RNA polymerase sigma factor SigA (386 aa).

The sigma-70 factor domain-2 stretch occupies residues 154-224; it reads LAEANLRLVV…TRAIADQART (71 aa). The Interaction with polymerase core subunit RpoC signature appears at 178–181; the sequence is DLIQ. The segment at 233–309 is sigma-70 factor domain-3; it reads ETINKLIRVQ…DDVIESPVDY (77 aa). Residues 322-375 are sigma-70 factor domain-4; it reads VMDTLTDREENVLRMRFGLDDGRMHTLEDVGKQFKVTRERIRQIEAKAIKKLRH. Residues 348–367 constitute a DNA-binding region (H-T-H motif); it reads LEDVGKQFKVTRERIRQIEA.

It belongs to the sigma-70 factor family. RpoD/SigA subfamily. As to quaternary structure, interacts transiently with the RNA polymerase catalytic core.

It is found in the cytoplasm. Its function is as follows. Sigma factors are initiation factors that promote the attachment of RNA polymerase to specific initiation sites and are then released. This sigma factor is the primary sigma factor during exponential growth. This chain is RNA polymerase sigma factor SigA, found in Lactococcus lactis subsp. lactis (strain IL1403) (Streptococcus lactis).